Consider the following 156-residue polypeptide: Cyclic pyranopterin monophosphate synthase (156 aa).

Residues 75–77 (LCH) and 111–112 (ME) each bind substrate. Asp126 is a catalytic residue.

It belongs to the MoaC family. As to quaternary structure, homohexamer; trimer of dimers.

It carries out the reaction (8S)-3',8-cyclo-7,8-dihydroguanosine 5'-triphosphate = cyclic pyranopterin phosphate + diphosphate. Its pathway is cofactor biosynthesis; molybdopterin biosynthesis. In terms of biological role, catalyzes the conversion of (8S)-3',8-cyclo-7,8-dihydroguanosine 5'-triphosphate to cyclic pyranopterin monophosphate (cPMP). In Corynebacterium glutamicum (strain ATCC 13032 / DSM 20300 / JCM 1318 / BCRC 11384 / CCUG 27702 / LMG 3730 / NBRC 12168 / NCIMB 10025 / NRRL B-2784 / 534), this protein is Cyclic pyranopterin monophosphate synthase.